Here is a 52-residue protein sequence, read N- to C-terminus: uncharacterized protein (52 aa).

Residues 1-52 (MFGFIYRDPSPAPQGKIRDGSKDPKTPGGGGGGGGGISPNGGAPLGGKGFSM) form a disordered region. A compositionally biased stretch (basic and acidic residues) spans 16 to 25 (KIRDGSKDPK). The span at 27–52 (PGGGGGGGGGISPNGGAPLGGKGFSM) shows a compositional bias: gly residues.

This is an uncharacterized protein from Dictyostelium discoideum (Social amoeba).